The sequence spans 333 residues: DNA primase small subunit PriS (333 aa).

Active-site residues include Asp-96, Asp-98, and Asp-237.

Belongs to the eukaryotic-type primase small subunit family. In terms of assembly, heterodimer of a small subunit (PriS) and a large subunit (PriL). Mg(2+) is required as a cofactor. Mn(2+) serves as cofactor.

Its function is as follows. Catalytic subunit of DNA primase, an RNA polymerase that catalyzes the synthesis of short RNA molecules used as primers for DNA polymerase during DNA replication. The small subunit contains the primase catalytic core and has DNA synthesis activity on its own. Binding to the large subunit stabilizes and modulates the activity, increasing the rate of DNA synthesis while decreasing the length of the DNA fragments, and conferring RNA synthesis capability. The DNA polymerase activity may enable DNA primase to also catalyze primer extension after primer synthesis. May also play a role in DNA repair. The polypeptide is DNA primase small subunit PriS (Thermoplasma volcanium (strain ATCC 51530 / DSM 4299 / JCM 9571 / NBRC 15438 / GSS1)).